The sequence spans 85 residues: MAHKKGLGSSKNGRDSNAQRLGVKVFGGQLVPGGSIIVRQRGTKIKPGNNVGWGKDDTLFAKVTGVVEFRDRGRMGKFVNINASV.

Belongs to the bacterial ribosomal protein bL27 family.

This Solibacter usitatus (strain Ellin6076) protein is Large ribosomal subunit protein bL27.